A 311-amino-acid chain; its full sequence is Very-long-chain 3-oxoacyl-CoA reductase-B (311 aa).

A helical transmembrane segment spans residues 8-28 (LFWVGAVTVLWLSVSSLWSLI). Residue 48 to 77 (GKWAVVTGATDGIGKAYAEELARRGFAIVL) participates in NADP(+) binding. Residues 125 to 145 (IGVLVNNVGVSYSYPEFFLNI) form a helical membrane-spanning segment. Residue serine 187 participates in substrate binding. Tyrosine 200 acts as the Proton acceptor in catalysis. A helical transmembrane segment spans residues 269–289 (GYLPHAIMGWVTASLLPAKLL).

This sequence belongs to the short-chain dehydrogenases/reductases (SDR) family. 17-beta-HSD 3 subfamily.

It localises to the endoplasmic reticulum membrane. The enzyme catalyses a very-long-chain (3R)-3-hydroxyacyl-CoA + NADP(+) = a very-long-chain 3-oxoacyl-CoA + NADPH + H(+). It carries out the reaction 17beta-estradiol + NAD(+) = estrone + NADH + H(+). The catalysed reaction is 17beta-estradiol + NADP(+) = estrone + NADPH + H(+). It functions in the pathway lipid metabolism; fatty acid biosynthesis. It participates in steroid biosynthesis; estrogen biosynthesis. Its function is as follows. Catalyzes the second of the four reactions of the long-chain fatty acids elongation cycle. This endoplasmic reticulum-bound enzymatic process, allows the addition of two carbons to the chain of long- and very long-chain fatty acids/VLCFAs per cycle. This enzyme has a 3-ketoacyl-CoA reductase activity, reducing 3-ketoacyl-CoA to 3-hydroxyacyl-CoA, within each cycle of fatty acid elongation. Thereby, it may participate in the production of VLCFAs of different chain lengths that are involved in multiple biological processes as precursors of membrane lipids and lipid mediators. May also catalyze the transformation of estrone (E1) into estradiol (E2) and play a role in estrogen formation. The sequence is that of Very-long-chain 3-oxoacyl-CoA reductase-B (hsd17b12b) from Danio rerio (Zebrafish).